Reading from the N-terminus, the 264-residue chain is Orotidine 5'-phosphate decarboxylase (264 aa).

Substrate contacts are provided by residues D37, 59–61 (KTH), 91–100 (DRKFADIGNT), Y217, and R235. K93 (proton donor) is an active-site residue.

The protein belongs to the OMP decarboxylase family.

It carries out the reaction orotidine 5'-phosphate + H(+) = UMP + CO2. Its pathway is pyrimidine metabolism; UMP biosynthesis via de novo pathway; UMP from orotate: step 2/2. This Torulaspora delbrueckii (Yeast) protein is Orotidine 5'-phosphate decarboxylase (URA3).